Consider the following 220-residue polypeptide: LOB domain-containing protein 31 (220 aa).

The LOB domain maps to 10–112; the sequence is GPCGACKFLR…AELAYVQTQL (103 aa). Positions 117 to 172 are disordered; sequence GLPPPNSQNNSRTEAASSSNVPLISSVDSKDNMSSSSSHIPCMSQQQEQEQPKEAI. Residues 123–139 are compositionally biased toward polar residues; it reads SQNNSRTEAASSSNVPL.

The protein belongs to the LOB domain-containing protein family. As to expression, expressed in roots, stems and flowers.

In Arabidopsis thaliana (Mouse-ear cress), this protein is LOB domain-containing protein 31 (LBD31).